The following is a 74-amino-acid chain: ATP synthase subunit c (74 aa).

The next 2 membrane-spanning stretches (helical) occupy residues isoleucine 13–isoleucine 33 and isoleucine 51–isoleucine 71.

It belongs to the ATPase C chain family. In terms of assembly, F-type ATPases have 2 components, F(1) - the catalytic core - and F(0) - the membrane proton channel. F(1) has five subunits: alpha(3), beta(3), gamma(1), delta(1), epsilon(1). F(0) has three main subunits: a(1), b(2) and c(10-14). The alpha and beta chains form an alternating ring which encloses part of the gamma chain. F(1) is attached to F(0) by a central stalk formed by the gamma and epsilon chains, while a peripheral stalk is formed by the delta and b chains.

It localises to the cell inner membrane. F(1)F(0) ATP synthase produces ATP from ADP in the presence of a proton or sodium gradient. F-type ATPases consist of two structural domains, F(1) containing the extramembraneous catalytic core and F(0) containing the membrane proton channel, linked together by a central stalk and a peripheral stalk. During catalysis, ATP synthesis in the catalytic domain of F(1) is coupled via a rotary mechanism of the central stalk subunits to proton translocation. Its function is as follows. Key component of the F(0) channel; it plays a direct role in translocation across the membrane. A homomeric c-ring of between 10-14 subunits forms the central stalk rotor element with the F(1) delta and epsilon subunits. The protein is ATP synthase subunit c of Granulibacter bethesdensis (strain ATCC BAA-1260 / CGDNIH1).